We begin with the raw amino-acid sequence, 358 residues long: Alanine racemase (358 aa).

Lys-34 serves as the catalytic Proton acceptor; specific for D-alanine. The residue at position 34 (Lys-34) is an N6-(pyridoxal phosphate)lysine. Arg-129 contributes to the substrate binding site. Residue Tyr-254 is the Proton acceptor; specific for L-alanine of the active site. Met-302 lines the substrate pocket.

It belongs to the alanine racemase family. The cofactor is pyridoxal 5'-phosphate.

It catalyses the reaction L-alanine = D-alanine. It functions in the pathway amino-acid biosynthesis; D-alanine biosynthesis; D-alanine from L-alanine: step 1/1. In terms of biological role, catalyzes the interconversion of L-alanine and D-alanine. May also act on other amino acids. In Vibrio vulnificus (strain CMCP6), this protein is Alanine racemase (alr).